The primary structure comprises 135 residues: Ribosomal RNA large subunit methyltransferase H (135 aa).

S-adenosyl-L-methionine contacts are provided by residues Leu52, Gly83, and 102–107; that span reads LSSLTL.

Belongs to the RNA methyltransferase RlmH family. Homodimer.

The protein localises to the cytoplasm. The enzyme catalyses pseudouridine(1915) in 23S rRNA + S-adenosyl-L-methionine = N(3)-methylpseudouridine(1915) in 23S rRNA + S-adenosyl-L-homocysteine + H(+). In terms of biological role, specifically methylates the pseudouridine at position 1915 (m3Psi1915) in 23S rRNA. This Polynucleobacter necessarius subsp. necessarius (strain STIR1) protein is Ribosomal RNA large subunit methyltransferase H.